A 456-amino-acid polypeptide reads, in one-letter code: Glycerol-3-phosphate dehydrogenase [NAD(+)] At3g07690, cytosolic (456 aa).

NAD(+) contacts are provided by residues 41-46, lysine 189, and alanine 228; that span reads GAGAWG. Lysine 189 contacts substrate. Lysine 278 functions as the Proton acceptor in the catalytic mechanism. NAD(+) is bound by residues arginine 340 and glutamine 368. Residue 340–341 coordinates substrate; it reads RN.

It belongs to the NAD-dependent glycerol-3-phosphate dehydrogenase family. In terms of assembly, homodimer.

It is found in the cytoplasm. The catalysed reaction is sn-glycerol 3-phosphate + NAD(+) = dihydroxyacetone phosphate + NADH + H(+). Required for glycerol-3-phosphate (G3P) accumulation during systemic acquired resistance (SAR) establishment. In Arabidopsis thaliana (Mouse-ear cress), this protein is Glycerol-3-phosphate dehydrogenase [NAD(+)] At3g07690, cytosolic.